Here is a 252-residue protein sequence, read N- to C-terminus: 4-hydroxy-tetrahydrodipicolinate reductase (252 aa).

8 to 13 contacts NAD(+); that stretch reads GALGRM. Position 36 (Arg-36) interacts with NADP(+). Residues 89–91 and 114–117 contribute to the NAD(+) site; these read GTT and SSNF. His-146 (proton donor/acceptor) is an active-site residue. Residue His-147 participates in (S)-2,3,4,5-tetrahydrodipicolinate binding. The active-site Proton donor is the Lys-150. 156–157 is a (S)-2,3,4,5-tetrahydrodipicolinate binding site; it reads GT.

This sequence belongs to the DapB family.

Its subcellular location is the cytoplasm. The enzyme catalyses (S)-2,3,4,5-tetrahydrodipicolinate + NAD(+) + H2O = (2S,4S)-4-hydroxy-2,3,4,5-tetrahydrodipicolinate + NADH + H(+). It catalyses the reaction (S)-2,3,4,5-tetrahydrodipicolinate + NADP(+) + H2O = (2S,4S)-4-hydroxy-2,3,4,5-tetrahydrodipicolinate + NADPH + H(+). The protein operates within amino-acid biosynthesis; L-lysine biosynthesis via DAP pathway; (S)-tetrahydrodipicolinate from L-aspartate: step 4/4. In terms of biological role, catalyzes the conversion of 4-hydroxy-tetrahydrodipicolinate (HTPA) to tetrahydrodipicolinate. The chain is 4-hydroxy-tetrahydrodipicolinate reductase from Methanoculleus marisnigri (strain ATCC 35101 / DSM 1498 / JR1).